Reading from the N-terminus, the 166-residue chain is uncharacterized protein (166 aa).

4Fe-4S ferredoxin-type domains are found at residues 3-33 (MKKI…GRIA), 37-67 (KDGK…EHKD), and 68-97 (GYVY…MEDK). Cysteine 13, cysteine 16, cysteine 19, cysteine 23, cysteine 46, cysteine 49, cysteine 54, cysteine 58, cysteine 77, cysteine 80, cysteine 83, cysteine 87, cysteine 101, cysteine 104, cysteine 111, and cysteine 115 together coordinate [4Fe-4S] cluster.

[4Fe-4S] cluster serves as cofactor.

This is an uncharacterized protein from Methanocaldococcus jannaschii (strain ATCC 43067 / DSM 2661 / JAL-1 / JCM 10045 / NBRC 100440) (Methanococcus jannaschii).